The chain runs to 144 residues: Interleukin-3 (144 aa).

Positions 1–17 (MSSLSILHLLLLLLALH) are cleaved as a signal peptide.

This sequence belongs to the IL-3 family. As to quaternary structure, monomer.

It localises to the secreted. In terms of biological role, granulocyte/macrophage colony-stimulating factors are cytokines that act in hematopoiesis by controlling the production, differentiation, and function of 2 related white cell populations of the blood, the granulocytes and the monocytes-macrophages. Functionally, this CSF induces granulocytes, macrophages, mast cells, stem cells, erythroid cells, eosinophils and megakaryocytes. The sequence is that of Interleukin-3 (IL3) from Bos taurus (Bovine).